The chain runs to 170 residues: Shikimate kinase (170 aa).

Residue glycine 11–threonine 16 participates in ATP binding. Position 15 (threonine 15) interacts with Mg(2+). Residues aspartate 33, arginine 57, and glycine 80 each contribute to the substrate site. Arginine 119 lines the ATP pocket. A substrate-binding site is contributed by arginine 141.

This sequence belongs to the shikimate kinase family. In terms of assembly, monomer. Requires Mg(2+) as cofactor.

It is found in the cytoplasm. The enzyme catalyses shikimate + ATP = 3-phosphoshikimate + ADP + H(+). Its pathway is metabolic intermediate biosynthesis; chorismate biosynthesis; chorismate from D-erythrose 4-phosphate and phosphoenolpyruvate: step 5/7. Catalyzes the specific phosphorylation of the 3-hydroxyl group of shikimic acid using ATP as a cosubstrate. In Azobacteroides pseudotrichonymphae genomovar. CFP2, this protein is Shikimate kinase.